The primary structure comprises 335 residues: Phosphatidylinositol:ceramide inositolphosphotransferase (335 aa).

At Met1–Arg21 the chain is on the cytoplasmic side. A helical transmembrane segment spans residues Phe22–Ala42. At Arg43 to Asp72 the chain is on the extracellular side. The chain crosses the membrane as a helical span at residues Val73 to His93. At Arg94–Gly98 the chain is on the cytoplasmic side. The helical transmembrane segment at Leu99 to Trp119 threads the bilayer. Topologically, residues Asp120–Arg139 are extracellular. Residues Tyr140–Tyr160 traverse the membrane as a helical segment. Residues Pro161–Asn179 lie on the Cytoplasmic side of the membrane. Residues Val180 to Ser200 traverse the membrane as a helical segment. Residues Gly201–Thr203 are Extracellular-facing. His202 is a catalytic residue. The helical transmembrane segment at Val204–Phe224 threads the bilayer. Topologically, residues Arg225–Trp335 are cytoplasmic. Residues His245 and Asp249 contribute to the active site.

This sequence belongs to the sphingomyelin synthase family.

Its subcellular location is the membrane. Its function is as follows. Bidirectional lipid inositolphosphotransferase capable of converting phosphatidylinositol (PI) and ceramide to inositol-phosphorylceramide (IPC) and diacylglycerol (DAG) and vice versa. Direction is dependent on the relative concentrations of DAG and ceramide as phosphoinositol acceptors. Essential for viability of the pathogenic bloodstream stage of this human protozoan parasite and, consequently, can be considered as potential drug target. This Trypanosoma cruzi (strain CL Brener) protein is Phosphatidylinositol:ceramide inositolphosphotransferase.